Consider the following 157-residue polypeptide: Frd operon probable iron-sulfur subunit A (157 aa).

4Fe-4S ferredoxin-type domains follow at residues 24-55 (KGFS…IHNK), 56-85 (DYYY…VVSR), and 100-133 (FKAE…CIDR). 12 residues coordinate [4Fe-4S] cluster: Cys34, Cys37, Cys42, Cys46, Cys65, Cys68, Cys71, Cys75, Cys107, Cys110, Cys119, and Cys123.

The sequence is that of Frd operon probable iron-sulfur subunit A from Proteus vulgaris.